A 117-amino-acid chain; its full sequence is Immunoglobulin heavy variable 3-48 (117 aa).

The signal sequence occupies residues 1 to 19 (MELGLCWVFLVAILEGVQC). Residues 20–44 (EVQLVESGGGLVQPGGSLRLSCAAS) are framework-1. The Ig-like domain maps to 20 to 117 (EVQLVESGGG…EDTAVYYCAR (98 aa)). The cysteines at positions 41 and 115 are disulfide-linked. Residues 45-52 (GFTFSSYE) are complementarity-determining-1. The tract at residues 53–69 (MNWVRQAPGKGLEWVSY) is framework-2. Residues 70-77 (ISSSGSTI) are complementarity-determining-2. The framework-3 stretch occupies residues 78-115 (YYADSVKGRFTISRDNAKNSLYLQMNSLRAEDTAVYYC). Positions 116–117 (AR) are complementarity-determining-3.

As to quaternary structure, immunoglobulins are composed of two identical heavy chains and two identical light chains; disulfide-linked. In terms of processing, the N-terminus is blocked.

Its subcellular location is the secreted. The protein localises to the cell membrane. Its function is as follows. V region of the variable domain of immunoglobulin heavy chains that participates in the antigen recognition. Immunoglobulins, also known as antibodies, are membrane-bound or secreted glycoproteins produced by B lymphocytes. In the recognition phase of humoral immunity, the membrane-bound immunoglobulins serve as receptors which, upon binding of a specific antigen, trigger the clonal expansion and differentiation of B lymphocytes into immunoglobulins-secreting plasma cells. Secreted immunoglobulins mediate the effector phase of humoral immunity, which results in the elimination of bound antigens. The antigen binding site is formed by the variable domain of one heavy chain, together with that of its associated light chain. Thus, each immunoglobulin has two antigen binding sites with remarkable affinity for a particular antigen. The variable domains are assembled by a process called V-(D)-J rearrangement and can then be subjected to somatic hypermutations which, after exposure to antigen and selection, allow affinity maturation for a particular antigen. This is Immunoglobulin heavy variable 3-48 from Homo sapiens (Human).